We begin with the raw amino-acid sequence, 318 residues long: Probable cell division protein WhiA (318 aa).

The H-T-H motif DNA-binding region spans 281–314 (SLKELGQMLVPPVGKSGVNHRLRKIEEISKKLKE).

It belongs to the WhiA family.

Functionally, involved in cell division and chromosome segregation. The sequence is that of Probable cell division protein WhiA from Thermoanaerobacter sp. (strain X514).